A 201-amino-acid chain; its full sequence is Ras-related protein Rab-9A (201 aa).

Ala-2 carries the N-acetylalanine modification. GTP contacts are provided by Gly-17, Val-18, Gly-19, Lys-20, Ser-21, Ser-22, Ser-34, His-38, and Thr-39. Ser-21 provides a ligand contact to Mg(2+). The short motif at 31-42 is the Switch 1 element; that stretch reads KFDSQLFHTIGV. Ser-34 bears the Phosphoserine mark. Mg(2+) contacts are provided by Thr-39 and Asp-62. A Switch 2 motif is present at residues 64-78; it reads AGQERFRSLRTPFYR. Residues Gly-65, Asn-124, Lys-125, Asp-127, and Lys-156 each coordinate GTP. A Phosphoserine modification is found at Ser-179. Thr-187 bears the Phosphothreonine mark. 2 S-geranylgeranyl cysteine lipidation sites follow: Cys-200 and Cys-201.

Belongs to the small GTPase superfamily. Rab family. In terms of assembly, interacts (preferentially in its GTP-bound form) with GCC2 (via its GRIP domain). Interacts (GTP-bound form) with SGSM1; the GDP-bound form has much lower affinity for SGSM1. Interacts with SGSM2. The GTP-bound form but not the GDP-bound form interacts with HPS4 and the BLOC-3 complex (heterodimer of HPS1 and HPS4) but does not interact with HPS1 alone. Interacts (GTP-bound form) with NDE1; two RAB9A-GTP molecules lie on the opposite sides of the NDE1 homodimer; the interaction leads to RAB9A-dynein motor tethering. Interacts (GTP-bound form) with NDEL1. Mg(2+) is required as a cofactor.

It is found in the cell membrane. The protein resides in the endoplasmic reticulum membrane. The protein localises to the golgi apparatus membrane. It localises to the late endosome. Its subcellular location is the cytoplasmic vesicle. It is found in the phagosome membrane. The protein resides in the phagosome. The protein localises to the cytoplasmic vesicle membrane. It localises to the melanosome. The catalysed reaction is GTP + H2O = GDP + phosphate + H(+). Regulated by guanine nucleotide exchange factors (GEFs) which promote the exchange of bound GDP for free GTP. Regulated by GTPase activating proteins (GAPs) which increase the GTP hydrolysis activity. Inhibited by GDP dissociation inhibitors (GDIs). Its function is as follows. The small GTPases Rab are key regulators of intracellular membrane trafficking, from the formation of transport vesicles to their fusion with membranes. Rabs cycle between an inactive GDP-bound form and an active GTP-bound form that is able to recruit to membranes different sets of downstream effectors directly responsible for vesicle formation, movement, tethering and fusion. RAB9A is involved in the transport of proteins between the endosomes and the trans-Golgi network (TGN). Specifically uses NDE1/NDEL1 as an effector to interact with the dynein motor complex in order to control retrograde trafficking of RAB9-associated late endosomes to the TGN. Involved in the recruitment of SGSM2 to melanosomes and is required for the proper trafficking of melanogenic enzymes TYR, TYRP1 and DCT/TYRP2 to melanosomes in melanocytes. This Rattus norvegicus (Rat) protein is Ras-related protein Rab-9A.